The following is a 507-amino-acid chain: TOM1-like protein 2 (507 aa).

Residues 20-152 (ATDGSLQSED…ELKRRGIEFP (133 aa)) enclose the VHS domain. At Ser-160 the chain carries Phosphoserine. The residue at position 164 (Thr-164) is a Phosphothreonine. The segment at 164–200 (TPQRSVPEMDPAATIPRSQTQPRTTAGTYSSPPPASY) is disordered. The GAT domain maps to 219-307 (EQIARLRSEL…VFLRYERFER (89 aa)). Positions 329–334 (NLIDLG) match the Clathrin-binding motif. The tract at residues 466-507 (ERAKAAETVPDLPSPPTEAPAPASNTSTRKKPERSDDALFAL) is disordered. Residues 498-507 (ERSDDALFAL) show a composition bias toward basic and acidic residues.

It belongs to the TOM1 family. In terms of assembly, interacts with clathrin, SRC and TOLLIP. Interacts with MYO6. In terms of tissue distribution, ubiquitously expressed. Splicing pattern displays tissue specific variation.

Functionally, acts as a MYO6/Myosin VI adapter protein that targets myosin VI to endocytic structures. May also play a role in recruiting clathrin to endosomes. May regulate growth factor-induced mitogenic signaling. The sequence is that of TOM1-like protein 2 (Tom1l2) from Mus musculus (Mouse).